The sequence spans 164 residues: Small ribosomal subunit protein uS5 (164 aa).

Residues 11–74 enclose the S5 DRBM domain; the sequence is LKEKLISVNR…EKARKNMIII (64 aa).

This sequence belongs to the universal ribosomal protein uS5 family. Part of the 30S ribosomal subunit. Contacts proteins S4 and S8.

In terms of biological role, with S4 and S12 plays an important role in translational accuracy. Its function is as follows. Located at the back of the 30S subunit body where it stabilizes the conformation of the head with respect to the body. The chain is Small ribosomal subunit protein uS5 from Buchnera aphidicola subsp. Cinara cedri (strain Cc).